Reading from the N-terminus, the 113-residue chain is Parvalbumin beta (113 aa).

N-acetylalanine is present on alanine 1. Cysteine 18 carries S-linked (Glc) cysteine glycosylation. 2 consecutive EF-hand domains span residues 38 to 73 (FSADELKKLFKIADEDKEGFIEEDELKLFLIAFAAD) and 77 to 112 (LTDAETKAFLKAGDSDGDGKIGVDEFGALVDKWGAK). Ca(2+) is bound by residues aspartate 51, aspartate 53, glutamate 55, phenylalanine 57, glutamate 59, glutamate 62, aspartate 90, aspartate 92, aspartate 94, lysine 96, and glutamate 101.

Belongs to the parvalbumin family. Muscle (at protein level).

Its function is as follows. In muscle, parvalbumin is thought to be involved in relaxation after contraction. It binds two calcium ions. The chain is Parvalbumin beta from Gadus morhua subsp. callarias (Baltic cod).